The primary structure comprises 335 residues: Tryptophan--tRNA ligase (335 aa).

ATP is bound by residues 19-21 (QPS) and 28-29 (GN). Positions 20-29 (PSSGMLHLGN) match the 'HIGH' region motif. Residue Asp-143 coordinates L-tryptophan. ATP contacts are provided by residues 155 to 157 (GAD), Ile-192, and 201 to 205 (KMSKS). Residues 201-205 (KMSKS) carry the 'KMSKS' region motif.

This sequence belongs to the class-I aminoacyl-tRNA synthetase family. Homodimer.

It is found in the cytoplasm. It carries out the reaction tRNA(Trp) + L-tryptophan + ATP = L-tryptophyl-tRNA(Trp) + AMP + diphosphate + H(+). Functionally, catalyzes the attachment of tryptophan to tRNA(Trp). In Tropheryma whipplei (strain TW08/27) (Whipple's bacillus), this protein is Tryptophan--tRNA ligase.